A 168-amino-acid polypeptide reads, in one-letter code: Nicotinamide-nucleotide adenylyltransferase (168 aa).

This sequence belongs to the archaeal NMN adenylyltransferase family.

It is found in the cytoplasm. It carries out the reaction beta-nicotinamide D-ribonucleotide + ATP + H(+) = diphosphate + NAD(+). Its pathway is cofactor biosynthesis; NAD(+) biosynthesis; NAD(+) from nicotinamide D-ribonucleotide: step 1/1. This Methanoculleus marisnigri (strain ATCC 35101 / DSM 1498 / JR1) protein is Nicotinamide-nucleotide adenylyltransferase.